A 137-amino-acid polypeptide reads, in one-letter code: Large ribosomal subunit protein uL16 (137 aa).

Positions M1–N17 are enriched in basic residues. Positions M1–Q22 are disordered.

It belongs to the universal ribosomal protein uL16 family. Part of the 50S ribosomal subunit.

Its function is as follows. Binds 23S rRNA and is also seen to make contacts with the A and possibly P site tRNAs. This is Large ribosomal subunit protein uL16 from Teredinibacter turnerae (strain ATCC 39867 / T7901).